A 93-amino-acid polypeptide reads, in one-letter code: MRGETPTLKDIVLFDIPTCETPIDLYCYEQLDSSDEDDQAKQDIQRYRILCVCTQCYKSVKLVVQCTEADIRNLQQMLLGTLDIVCPLCARVE.

Residues 1–42 (MRGETPTLKDIVLFDIPTCETPIDLYCYEQLDSSDEDDQAKQ) form an E7 terminal domain region. The LXCXE motif; interaction with host RB1 and TMEM173/STING signature appears at 25-29 (LYCYE). A zinc finger lies at 53 to 89 (CTQCYKSVKLVVQCTEADIRNLQQMLLGTLDIVCPLC). Positions 71 to 79 (IRNLQQMLL) match the Nuclear export signal motif.

The protein belongs to the papillomaviridae E7 protein family. In terms of assembly, homodimer. Homooligomer. Interacts with host RB1; this interaction induces dissociation of RB1-E2F1 complex thereby disrupting RB1 activity. Interacts with host EP300; this interaction represses EP300 transcriptional activity. Interacts with protein E2; this interaction inhibits E7 oncogenic activity. Interacts with host TMEM173/STING; this interaction impairs the ability of TMEM173/STING to sense cytosolic DNA and promote the production of type I interferon (IFN-alpha and IFN-beta). In terms of processing, highly phosphorylated.

The protein resides in the host cytoplasm. It localises to the host nucleus. Plays a role in viral genome replication by driving entry of quiescent cells into the cell cycle. Stimulation of progression from G1 to S phase allows the virus to efficiently use the cellular DNA replicating machinery to achieve viral genome replication. E7 protein has both transforming and trans-activating activities. Induces the disassembly of the E2F1 transcription factor from RB1, with subsequent transcriptional activation of E2F1-regulated S-phase genes. Interferes with host histone deacetylation mediated by HDAC1 and HDAC2, leading to transcription activation. Also plays a role in the inhibition of both antiviral and antiproliferative functions of host interferon alpha. Interaction with host TMEM173/STING impairs the ability of TMEM173/STING to sense cytosolic DNA and promote the production of type I interferon (IFN-alpha and IFN-beta). This Human papillomavirus 42 protein is Protein E7.